A 411-amino-acid polypeptide reads, in one-letter code: Putative ion-transport protein YfeO (411 aa).

Helical transmembrane passes span 9 to 29 (MLLL…VLIA), 54 to 74 (DSPF…GLII), 99 to 119 (ALPG…SLGP), 149 to 169 (ILAS…AALI), 186 to 206 (LFAP…FFHP), 223 to 243 (IASG…AVWC), 258 to 278 (VLIL…GGPL), 296 to 316 (LGAG…VIAA), 322 to 342 (GGRI…LHAH), 343 to 363 (VEAV…VLVV), and 386 to 406 (LLCI…LLAA).

It belongs to the chloride channel (TC 2.A.49) family.

The protein resides in the cell membrane. This is Putative ion-transport protein YfeO from Salmonella schwarzengrund (strain CVM19633).